The chain runs to 284 residues: MTRPAEPARAAGRHRPRKRLGQHFLTDQRIIDAIVQAIAPQPGQPMVEIGPGLAALTQPLVERLGRLTVIELDRDLALRLRRHAHLQVIQADVLRVDFTALAQTLRATPPTPPTRLRVVGNLPYNISTPILFHLLAHGSAIEDQHFMLQKQVVERMVAKPGGSDYGRLSVMLQWRYAMEKLLHVPPASFAPPPRVDSAVVRMLPHAQPAAVSRPMLEELVQLAFSQRRKLLHHTLGRWLDAHQYAGRFDTRRRAEEVPVQEYLDLAREAHRWIADGKDPPCAGA.

Residues His23, Leu25, Gly50, Glu71, Asp92, and Asn121 each contribute to the S-adenosyl-L-methionine site.

Belongs to the class I-like SAM-binding methyltransferase superfamily. rRNA adenine N(6)-methyltransferase family. RsmA subfamily.

It localises to the cytoplasm. The enzyme catalyses adenosine(1518)/adenosine(1519) in 16S rRNA + 4 S-adenosyl-L-methionine = N(6)-dimethyladenosine(1518)/N(6)-dimethyladenosine(1519) in 16S rRNA + 4 S-adenosyl-L-homocysteine + 4 H(+). Functionally, specifically dimethylates two adjacent adenosines (A1518 and A1519) in the loop of a conserved hairpin near the 3'-end of 16S rRNA in the 30S particle. May play a critical role in biogenesis of 30S subunits. The polypeptide is Ribosomal RNA small subunit methyltransferase A (Verminephrobacter eiseniae (strain EF01-2)).